A 370-amino-acid chain; its full sequence is Calcium-binding protein 1 (370 aa).

Residues 1 to 198 form a disordered region; that stretch reads MGGGDGAAFK…GRGDSVPAAA (198 aa). Glycine 2 carries the N-myristoyl glycine lipid modification. A lipid anchor (S-palmitoyl cysteine) is attached at glycine 4. Composition is skewed to low complexity over residues 50–61, 68–84, and 148–157; these read HASAGPAAMSSH, KTSL…GGSR, and ALPAAASRPS. EF-hand domains follow at residues 225–260, 279–296, 302–337, and 339–370; these read EEIE…MGYM, GHVD…KLLA, IGVK…LLGH, and VGHR…MMSR. 5 residues coordinate Ca(2+): aspartate 238, aspartate 240, aspartate 242, tyrosine 244, and aspartate 249. The Mg(2+) site is built by aspartate 238, aspartate 240, aspartate 242, and tyrosine 244. Ca(2+) is bound by residues aspartate 315, asparagine 317, aspartate 319, and glutamate 321. A Phosphoserine modification is found at serine 323. The Ca(2+) site is built by glutamate 326, aspartate 352, leucine 353, asparagine 354, aspartate 356, glycine 357, arginine 358, aspartate 360, and glutamate 363.

As to quaternary structure, homodimer; when bound to calcium or magnesium. Interacts (via C-terminus) with ITPR1, ITPR2 and ITPR3. This binding is calcium dependent and the interaction correlates with calcium concentration. An additional calcium-independent interaction with the N-terminus of ITPR1 results in a decreased InsP(3) binding to the receptor. Interacts with CACNA1A (via C-terminal CDB motif) in the pre- and postsynaptic membranes. Interacts with CACNA1C (via C-terminal C and IQ motifs). The binding to the C motif is calcium independent whereas the binding to IQ requires the presence of calcium and is mutually exclusive with calmodulin binding. Interacts with CACNA1D. Interacts with TRPC5 (via C-terminus). Interacts (via EF-hands 1 and 2) at microtubules with MAP1LC3B. Interacts with MYO1C. Interacts (via EF-hands 1 and 2) with NSMF (via the central NLS-containing motif region), the interaction occurs in a calcium dependent manner after synaptic NMDA receptor stimulation and prevents nuclear import of NSMF. Interacts with SPACA9. In terms of processing, phosphorylated. The phosphorylation regulates the activity. In terms of tissue distribution, retina and brain. Somatodendritic compartment of neurons. Calbrain was found exclusively in brain where it is abundant in the hippocampus, habenular area in the epithalamus and in the cerebellum.

Its subcellular location is the cytoplasm. The protein resides in the cytoskeleton. It localises to the perinuclear region. The protein localises to the cell membrane. It is found in the golgi apparatus. Its subcellular location is the postsynaptic density. The protein resides in the cell cortex. In terms of biological role, modulates calcium-dependent activity of inositol 1,4,5-triphosphate receptors (ITPRs). Inhibits agonist-induced intracellular calcium signaling. Enhances inactivation and does not support calcium-dependent facilitation of voltage-dependent P/Q-type calcium channels. Causes calcium-dependent facilitation and inhibits inactivation of L-type calcium channels by binding to the same sites as calmodulin in the C-terminal domain of CACNA1C, but has an opposite effect on channel function. Suppresses the calcium-dependent inactivation of CACNA1D. Inhibits TRPC5 channels. Prevents NMDA receptor-induced cellular degeneration. Required for the normal transfer of light signals through the retina. This Homo sapiens (Human) protein is Calcium-binding protein 1 (CABP1).